The primary structure comprises 311 residues: tRNA dimethylallyltransferase (311 aa).

11–18 (GPTASGKS) is an ATP binding site. 13-18 (TASGKS) contributes to the substrate binding site. 2 interaction with substrate tRNA regions span residues 36-39 (DSMQ) and 160-164 (QRLIR).

The protein belongs to the IPP transferase family. Monomer. Mg(2+) is required as a cofactor.

It carries out the reaction adenosine(37) in tRNA + dimethylallyl diphosphate = N(6)-dimethylallyladenosine(37) in tRNA + diphosphate. Functionally, catalyzes the transfer of a dimethylallyl group onto the adenine at position 37 in tRNAs that read codons beginning with uridine, leading to the formation of N6-(dimethylallyl)adenosine (i(6)A). This is tRNA dimethylallyltransferase from Rickettsia prowazekii (strain Madrid E).